The chain runs to 613 residues: Tetratricopeptide repeat protein 39A (613 aa).

3 TPR repeats span residues 315–348 (AIFL…QQHW), 505–538 (CLVK…EKKI), and 546–579 (PNAL…YKNY).

This sequence belongs to the TTC39 family.

The polypeptide is Tetratricopeptide repeat protein 39A (TTC39A) (Homo sapiens (Human)).